A 54-amino-acid chain; its full sequence is UPF0391 membrane protein Bpro_0879 (54 aa).

Helical transmembrane passes span 6–26 and 30–50; these read VVFL…IAAG and IAKI…VMGL.

This sequence belongs to the UPF0391 family.

The protein resides in the cell membrane. The sequence is that of UPF0391 membrane protein Bpro_0879 from Polaromonas sp. (strain JS666 / ATCC BAA-500).